Consider the following 423-residue polypeptide: Serine hydroxymethyltransferase (423 aa).

(6S)-5,6,7,8-tetrahydrofolate-binding positions include Leu118 and 122–124 (GHL). Lys227 bears the N6-(pyridoxal phosphate)lysine mark. Residue 351-353 (SPF) coordinates (6S)-5,6,7,8-tetrahydrofolate.

It belongs to the SHMT family. Homodimer. Pyridoxal 5'-phosphate serves as cofactor.

The protein localises to the cytoplasm. It carries out the reaction (6R)-5,10-methylene-5,6,7,8-tetrahydrofolate + glycine + H2O = (6S)-5,6,7,8-tetrahydrofolate + L-serine. Its pathway is one-carbon metabolism; tetrahydrofolate interconversion. It functions in the pathway amino-acid biosynthesis; glycine biosynthesis; glycine from L-serine: step 1/1. Its function is as follows. Catalyzes the reversible interconversion of serine and glycine with tetrahydrofolate (THF) serving as the one-carbon carrier. This reaction serves as the major source of one-carbon groups required for the biosynthesis of purines, thymidylate, methionine, and other important biomolecules. Also exhibits THF-independent aldolase activity toward beta-hydroxyamino acids, producing glycine and aldehydes, via a retro-aldol mechanism. This Petrotoga mobilis (strain DSM 10674 / SJ95) protein is Serine hydroxymethyltransferase.